We begin with the raw amino-acid sequence, 302 residues long: Succinate--CoA ligase [ADP-forming] subunit alpha (302 aa).

CoA contacts are provided by residues T17–T20, K43, and I96–E98. Y159 is a binding site for substrate. H247 serves as the catalytic Tele-phosphohistidine intermediate.

It belongs to the succinate/malate CoA ligase alpha subunit family. In terms of assembly, heterotetramer of two alpha and two beta subunits.

It catalyses the reaction succinate + ATP + CoA = succinyl-CoA + ADP + phosphate. It carries out the reaction GTP + succinate + CoA = succinyl-CoA + GDP + phosphate. The protein operates within carbohydrate metabolism; tricarboxylic acid cycle; succinate from succinyl-CoA (ligase route): step 1/1. In terms of biological role, succinyl-CoA synthetase functions in the citric acid cycle (TCA), coupling the hydrolysis of succinyl-CoA to the synthesis of either ATP or GTP and thus represents the only step of substrate-level phosphorylation in the TCA. The alpha subunit of the enzyme binds the substrates coenzyme A and phosphate, while succinate binding and nucleotide specificity is provided by the beta subunit. This is Succinate--CoA ligase [ADP-forming] subunit alpha from Staphylococcus aureus (strain COL).